Here is a 397-residue protein sequence, read N- to C-terminus: Major outer membrane porin, serovar H (397 aa).

The N-terminal stretch at 1–22 is a signal peptide; the sequence is MKKLLKSVLVFAALSSASSLQA.

It belongs to the chlamydial porin (CP) (TC 1.B.2) family. In terms of assembly, part of a disulfide cross-linked outer membrane complex (COMC) composed of the major outer membrane porin (MOMP), the small cysteine-rich protein (OmcA) and the large cysteine-rich periplasmic protein (OmcB).

It localises to the cell outer membrane. In elementary bodies (EBs, the infectious stage, which is able to survive outside the host cell) provides the structural integrity of the outer envelope through disulfide cross-links with the small cysteine-rich protein and the large cysteine-rich periplasmic protein. It has been described in publications as the Sarkosyl-insoluble COMC (Chlamydia outer membrane complex), and serves as the functional equivalent of peptidoglycan. In terms of biological role, permits diffusion of specific solutes through the outer membrane. In Chlamydia trachomatis, this protein is Major outer membrane porin, serovar H (ompA).